Reading from the N-terminus, the 583-residue chain is Protein translocase subunit SecD (583 aa).

6 consecutive transmembrane segments (helical) span residues 7-27 (FGVV…TLQW), 419-439 (LVWG…EAGV), 446-468 (LLNL…LSSI), 469-489 (AGMI…FERI), 511-531 (FWAI…LSVL), and 538-558 (GFAY…LFVS).

The protein belongs to the SecD/SecF family. SecD subfamily. Forms a complex with SecF. Part of the essential Sec protein translocation apparatus which comprises SecA, SecYEG and auxiliary proteins SecDF. Other proteins may also be involved.

Its subcellular location is the cell inner membrane. Part of the Sec protein translocase complex. Interacts with the SecYEG preprotein conducting channel. SecDF uses the proton motive force (PMF) to complete protein translocation after the ATP-dependent function of SecA. This Treponema pallidum (strain Nichols) protein is Protein translocase subunit SecD.